A 223-amino-acid polypeptide reads, in one-letter code: Kinetochore protein Spc25 (223 aa).

Residues 65–115 (LRCGELEKRANFMEELTQELEATKQRNLVMRDQIKQLNVLARQHRNEVMES) adopt a coiled-coil conformation.

The protein belongs to the SPC25 family. In terms of assembly, component of the Ndc80 complex, which is composed of Ndc80, Nuf2 and Spc25.

The protein localises to the nucleus. Its subcellular location is the chromosome. It localises to the centromere. The protein resides in the kinetochore. Functionally, acts as a component of the essential kinetochore-associated Ndc80 complex, which is required for chromosome segregation and spindle checkpoint activity during meiosis and mitosis. Required for kinetochore integrity and the organization of stable microtubule binding sites in the outer plate of the kinetochore. Participates in SAC signaling that responds specifically to disruptions in spindle microtubule dynamics. The NDC80 complex synergistically enhances the affinity of the SKA1 complex for microtubules and may allow the NDC80 complex to track depolymerizing microtubules. In Drosophila lutescens (Fruit fly), this protein is Kinetochore protein Spc25.